Consider the following 128-residue polypeptide: Aspartate 1-decarboxylase (128 aa).

The active-site Schiff-base intermediate with substrate; via pyruvic acid is the S25. S25 bears the Pyruvic acid (Ser) mark. Residue T57 coordinates substrate. Y58 functions as the Proton donor in the catalytic mechanism. 73–75 (GSA) is a binding site for substrate.

It belongs to the PanD family. Heterooctamer of four alpha and four beta subunits. Pyruvate is required as a cofactor. Is synthesized initially as an inactive proenzyme, which is activated by self-cleavage at a specific serine bond to produce a beta-subunit with a hydroxyl group at its C-terminus and an alpha-subunit with a pyruvoyl group at its N-terminus.

The protein resides in the cytoplasm. The catalysed reaction is L-aspartate + H(+) = beta-alanine + CO2. It participates in cofactor biosynthesis; (R)-pantothenate biosynthesis; beta-alanine from L-aspartate: step 1/1. Its function is as follows. Catalyzes the pyruvoyl-dependent decarboxylation of aspartate to produce beta-alanine. In Burkholderia cenocepacia (strain ATCC BAA-245 / DSM 16553 / LMG 16656 / NCTC 13227 / J2315 / CF5610) (Burkholderia cepacia (strain J2315)), this protein is Aspartate 1-decarboxylase.